The primary structure comprises 1082 residues: Probable arabinosyltransferase B (1082 aa).

13 helical membrane passes run 28-50, 223-241, 262-281, 333-352, 359-381, 420-442, 462-481, 522-544, 557-574, 578-600, 613-635, 650-672, and 689-711; these read WVATIAGLLGFVLSVSIPLLPVT, LAAMLLAIVSTVIALLALW, VTAVDGVVVGGMAIWYVIGA, SIWIRLPDLICALICWLLLS, LGPAVAGSRAAMWAAGLVLLGAW, AITTAAFTLGIQPTGLIAVAALL, WPLIAPLLAAGTVILAVVFA, AISRRVAFVFTAMCLFPSLFMML, AWRLMGIIFATMFFLMFT, WTHHFGLFAAVGGAMAALATVLV, AFLSLVLFVLAFCFASTNGWWYV, GGVQISAIFFALSAIAALWAFWL, and APIPVAAGFMVVVMMASMAIGVV.

This sequence belongs to the emb family.

It is found in the cell membrane. In terms of biological role, arabinosyl transferase responsible for the polymerization of arabinose into the arabinan of arabinogalactan. The sequence is that of Probable arabinosyltransferase B (embB) from Mycolicibacterium smegmatis (Mycobacterium smegmatis).